Reading from the N-terminus, the 307-residue chain is 1-phosphofructokinase (307 aa).

Residues 217–222 (SMGSDG) and 249–250 (GD) each bind ATP. Catalysis depends on aspartate 250, which acts as the Proton acceptor.

The protein belongs to the carbohydrate kinase PfkB family.

The enzyme catalyses beta-D-fructose 1-phosphate + ATP = beta-D-fructose 1,6-bisphosphate + ADP + H(+). Its function is as follows. Catalyzes the ATP-dependent phosphorylation of fructose-l-phosphate to fructose-l,6-bisphosphate. The protein is 1-phosphofructokinase (fruK) of Borreliella burgdorferi (strain ATCC 35210 / DSM 4680 / CIP 102532 / B31) (Borrelia burgdorferi).